The primary structure comprises 409 residues: Probable peptidoglycan glycosyltransferase FtsW (409 aa).

Transmembrane regions (helical) follow at residues 42-62 (LFTL…SASL), 72-92 (PFHF…VMLA), 108-128 (LLLL…EVNG), 135-155 (VGPI…IYMA), 178-198 (LLFI…VVVL), 213-233 (LWQF…LIIV), 303-323 (FLGV…ALII), 337-357 (YLAY…IGVA), and 368-388 (LPLV…VGLL).

It belongs to the SEDS family. FtsW subfamily.

Its subcellular location is the cell inner membrane. It carries out the reaction [GlcNAc-(1-&gt;4)-Mur2Ac(oyl-L-Ala-gamma-D-Glu-L-Lys-D-Ala-D-Ala)](n)-di-trans,octa-cis-undecaprenyl diphosphate + beta-D-GlcNAc-(1-&gt;4)-Mur2Ac(oyl-L-Ala-gamma-D-Glu-L-Lys-D-Ala-D-Ala)-di-trans,octa-cis-undecaprenyl diphosphate = [GlcNAc-(1-&gt;4)-Mur2Ac(oyl-L-Ala-gamma-D-Glu-L-Lys-D-Ala-D-Ala)](n+1)-di-trans,octa-cis-undecaprenyl diphosphate + di-trans,octa-cis-undecaprenyl diphosphate + H(+). Its pathway is cell wall biogenesis; peptidoglycan biosynthesis. Functionally, peptidoglycan polymerase that is essential for cell division. The sequence is that of Probable peptidoglycan glycosyltransferase FtsW from Idiomarina loihiensis (strain ATCC BAA-735 / DSM 15497 / L2-TR).